A 191-amino-acid chain; its full sequence is Shikimate kinase (191 aa).

24–29 (GSGKTS) is an ATP binding site. Thr-28 contributes to the Mg(2+) binding site. Residues Asp-46, Arg-70, and Gly-92 each contribute to the substrate site. Arg-130 contributes to the ATP binding site. Arg-149 is a binding site for substrate.

It belongs to the shikimate kinase family. Monomer. Mg(2+) is required as a cofactor.

Its subcellular location is the cytoplasm. The enzyme catalyses shikimate + ATP = 3-phosphoshikimate + ADP + H(+). It participates in metabolic intermediate biosynthesis; chorismate biosynthesis; chorismate from D-erythrose 4-phosphate and phosphoenolpyruvate: step 5/7. Functionally, catalyzes the specific phosphorylation of the 3-hydroxyl group of shikimic acid using ATP as a cosubstrate. The sequence is that of Shikimate kinase from Synechococcus sp. (strain CC9902).